Consider the following 427-residue polypeptide: Type II methyltransferase M1.BsuMI (427 aa).

One can recognise an SAM-dependent MTase C5-type domain in the interval 84–427 (INIADLFSGC…SYLLALHQLR (344 aa)). The active site involves Cys176.

It belongs to the class I-like SAM-binding methyltransferase superfamily. C5-methyltransferase family. In terms of assembly, monomer. May form a complex with YdiP, also seems to be active alone.

The enzyme catalyses a 2'-deoxycytidine in DNA + S-adenosyl-L-methionine = a 5-methyl-2'-deoxycytidine in DNA + S-adenosyl-L-homocysteine + H(+). Somewhat inhibited by MgCl(2) and spermidine, strongly inhibited by MnCl(2). Functionally, a methylase, recognizes the double-stranded sequence 5'-YTCGAR-3', methylates C-3 on both strands, and protects the DNA from cleavage by the BsuMI endonuclease. The chain is Type II methyltransferase M1.BsuMI (ydiO) from Bacillus subtilis (strain 168).